Consider the following 1058-residue polypeptide: Receptor-type guanylate cyclase gcy-22 (1058 aa).

The N-terminal stretch at 1-23 (MSFISKCFICLLFSTYFLPPVNS) is a signal peptide. The Extracellular segment spans residues 25-470 (VLQVGFLAAN…PKSFTDQYLA (446 aa)). Asn-36, Asn-73, Asn-201, Asn-215, Asn-277, Asn-302, Asn-324, Asn-350, and Asn-386 each carry an N-linked (GlcNAc...) asparagine glycan. Residues 471–491 (IILGCTAAALVLIIAVISTIV) form a helical membrane-spanning segment. At 492–1058 (FLVRSKRQEE…IEAKENGESI (567 aa)) the chain is on the cytoplasmic side. One can recognise a Protein kinase domain in the interval 501–809 (EERLNQLWQV…SSNLMDHVFN (309 aa)). Positions 811 to 840 (LEQYASNLEDEVQARMKELTEEKKRSDVLL) form a coiled coil. The Guanylate cyclase domain maps to 867-997 (TIFFSDVVSF…DSVNTASRME (131 aa)).

The protein belongs to the adenylyl cyclase class-4/guanylyl cyclase family. As to expression, expression in ASER neuron begins at an early larval stage and is maintained in the adult.

The protein resides in the cell membrane. The catalysed reaction is GTP = 3',5'-cyclic GMP + diphosphate. Its function is as follows. Guanylate cyclase involved in the production of the second messenger cGMP. Regulates chemotaxis responses toward Li(1-), Mg(2+), Cl(1-), Br(1)- and I(1-) salt ions and methionine in ASE right (ASER) sensory neuron. May regulate ASER neuronal activity such as axon sprouting and calcium responses to changes in salt concentrations. The polypeptide is Receptor-type guanylate cyclase gcy-22 (Caenorhabditis elegans).